A 302-amino-acid chain; its full sequence is N-acetylmuramic acid 6-phosphate etherase (302 aa).

In terms of domain architecture, SIS spans 55 to 218 (AYPKFDQGGR…STGIMVKSGK (164 aa)). Glu-83 (proton donor) is an active-site residue. Glu-114 is an active-site residue.

The protein belongs to the GCKR-like family. MurNAc-6-P etherase subfamily. In terms of assembly, homodimer.

The catalysed reaction is N-acetyl-D-muramate 6-phosphate + H2O = N-acetyl-D-glucosamine 6-phosphate + (R)-lactate. It functions in the pathway amino-sugar metabolism; N-acetylmuramate degradation. In terms of biological role, specifically catalyzes the cleavage of the D-lactyl ether substituent of MurNAc 6-phosphate, producing GlcNAc 6-phosphate and D-lactate. The protein is N-acetylmuramic acid 6-phosphate etherase of Levilactobacillus brevis (strain ATCC 367 / BCRC 12310 / CIP 105137 / JCM 1170 / LMG 11437 / NCIMB 947 / NCTC 947) (Lactobacillus brevis).